A 263-amino-acid polypeptide reads, in one-letter code: Endonuclease NucS (263 aa).

The protein belongs to the NucS endonuclease family.

Its subcellular location is the cytoplasm. Cleaves both 3' and 5' ssDNA extremities of branched DNA structures. This is Endonuclease NucS from Methanocaldococcus jannaschii (strain ATCC 43067 / DSM 2661 / JAL-1 / JCM 10045 / NBRC 100440) (Methanococcus jannaschii).